The chain runs to 434 residues: Adenylosuccinate synthetase (434 aa).

Residues 11–17 (GDEGKGK) and 39–41 (GHT) contribute to the GTP site. Residue Asp12 is the Proton acceptor of the active site. Residues Asp12 and Gly39 each coordinate Mg(2+). Residues 12–15 (DEGK), 37–40 (NAGH), Thr134, Arg148, Asn230, Thr245, and Arg309 contribute to the IMP site. Residue His40 is the Proton donor of the active site. 305–311 (VTTGRKR) is a binding site for substrate. GTP-binding positions include Arg311, 337-339 (KLD), and 419-421 (GTG).

It belongs to the adenylosuccinate synthetase family. In terms of assembly, homodimer. Requires Mg(2+) as cofactor.

The protein resides in the cytoplasm. It carries out the reaction IMP + L-aspartate + GTP = N(6)-(1,2-dicarboxyethyl)-AMP + GDP + phosphate + 2 H(+). The protein operates within purine metabolism; AMP biosynthesis via de novo pathway; AMP from IMP: step 1/2. In terms of biological role, plays an important role in the de novo pathway and in the salvage pathway of purine nucleotide biosynthesis. Catalyzes the first committed step in the biosynthesis of AMP from IMP. The protein is Adenylosuccinate synthetase of Lachancea thermotolerans (strain ATCC 56472 / CBS 6340 / NRRL Y-8284) (Yeast).